The chain runs to 692 residues: Elongation factor G (692 aa).

The tr-type G domain maps to 8–283 (NRIRNIGIAA…AVIDYLPAPT (276 aa)). GTP contacts are provided by residues 17-24 (AHIDAGKT), 81-85 (DTPGH), and 135-138 (NKMD).

It belongs to the TRAFAC class translation factor GTPase superfamily. Classic translation factor GTPase family. EF-G/EF-2 subfamily.

Its subcellular location is the cytoplasm. Its function is as follows. Catalyzes the GTP-dependent ribosomal translocation step during translation elongation. During this step, the ribosome changes from the pre-translocational (PRE) to the post-translocational (POST) state as the newly formed A-site-bound peptidyl-tRNA and P-site-bound deacylated tRNA move to the P and E sites, respectively. Catalyzes the coordinated movement of the two tRNA molecules, the mRNA and conformational changes in the ribosome. This is Elongation factor G from Helicobacter pylori (strain Shi470).